A 438-amino-acid chain; its full sequence is 3-phosphoshikimate 1-carboxyvinyltransferase (438 aa).

3-phosphoshikimate contacts are provided by K25, S26, and R30. K25 is a binding site for phosphoenolpyruvate. Phosphoenolpyruvate contacts are provided by G99 and R128. 3-phosphoshikimate is bound by residues S173, Q175, D325, and K352. Q175 lines the phosphoenolpyruvate pocket. D325 functions as the Proton acceptor in the catalytic mechanism. Phosphoenolpyruvate is bound by residues R356 and R398.

This sequence belongs to the EPSP synthase family. In terms of assembly, monomer.

It localises to the cytoplasm. It carries out the reaction 3-phosphoshikimate + phosphoenolpyruvate = 5-O-(1-carboxyvinyl)-3-phosphoshikimate + phosphate. The protein operates within metabolic intermediate biosynthesis; chorismate biosynthesis; chorismate from D-erythrose 4-phosphate and phosphoenolpyruvate: step 6/7. In terms of biological role, catalyzes the transfer of the enolpyruvyl moiety of phosphoenolpyruvate (PEP) to the 5-hydroxyl of shikimate-3-phosphate (S3P) to produce enolpyruvyl shikimate-3-phosphate and inorganic phosphate. This is 3-phosphoshikimate 1-carboxyvinyltransferase from Prochlorococcus marinus (strain MIT 9515).